A 152-amino-acid polypeptide reads, in one-letter code: Transcriptional regulator MraZ (152 aa).

SpoVT-AbrB domains lie at 5–52 and 81–124; these read AQAI…PLKE and ATEC…SETE.

This sequence belongs to the MraZ family. Forms oligomers.

The protein resides in the cytoplasm. Its subcellular location is the nucleoid. The polypeptide is Transcriptional regulator MraZ (Mannheimia succiniciproducens (strain KCTC 0769BP / MBEL55E)).